Reading from the N-terminus, the 370-residue chain is Endopolygalacturonase A (370 aa).

Positions 1–19 (MPSAKPLFCLATLAGAALA) are cleaved as a signal peptide. The propeptide occupies 20–32 (APAPSRATDFNKR). An intrachain disulfide couples cysteine 35 to cysteine 50. PbH1 repeat units lie at residues 162–192 (SDNLVIEDVTIDNSDGDSEGGHNTDGFDISE), 193–214 (STYITITGATVKNQGDCVAINS), 215–235 (GENIYFSGGTCSGGHGLSIGS), 244–265 (VKNVTFIDSTVSDSENGVRIKT), 273–295 (VEDITYSNIQLSGISDYGIVIEQ), and 307–352 (SNGV…DITG). Cysteine 209 and cysteine 225 are disulfide-bonded. Histidine 229 is a catalytic residue. Asparagine 246 carries N-linked (GlcNAc...) asparagine glycosylation. Cystine bridges form between cysteine 335–cysteine 340 and cysteine 359–cysteine 368.

It belongs to the glycosyl hydrolase 28 family.

It is found in the secreted. It catalyses the reaction (1,4-alpha-D-galacturonosyl)n+m + H2O = (1,4-alpha-D-galacturonosyl)n + (1,4-alpha-D-galacturonosyl)m.. Functionally, involved in maceration and soft-rotting of plant tissue. Hydrolyzes the 1,4-alpha glycosidic bonds of de-esterified pectate in the smooth region of the plant cell wall. The protein is Endopolygalacturonase A (pgaA) of Aspergillus awamori (Black koji mold).